Consider the following 239-residue polypeptide: Small ribosomal subunit protein uS3 (239 aa).

The KH type-2 domain occupies 38 to 106 (IRELIEERFK…KTFVNVVEIK (69 aa)).

Belongs to the universal ribosomal protein uS3 family. In terms of assembly, part of the 30S ribosomal subunit. Forms a tight complex with proteins S10 and S14.

In terms of biological role, binds the lower part of the 30S subunit head. Binds mRNA in the 70S ribosome, positioning it for translation. The sequence is that of Small ribosomal subunit protein uS3 from Elusimicrobium minutum (strain Pei191).